Here is a 310-residue protein sequence, read N- to C-terminus: Cytochrome f (310 aa).

Positions 1 to 23 are cleaved as a signal peptide; it reads MRRLLSSTFAALIVGLAVFSAPA. Heme contacts are provided by tyrosine 28, cysteine 48, cysteine 51, and histidine 52. Residues 277–297 traverse the membrane as a helical segment; it reads IYGMLAFFAAVALAQIMLVLK.

Belongs to the cytochrome f family. The 4 large subunits of the cytochrome b6-f complex are cytochrome b6, subunit IV (17 kDa polypeptide, PetD), cytochrome f and the Rieske protein, while the 4 small subunits are PetG, PetL, PetM and PetN. The complex functions as a dimer. Heme serves as cofactor.

It is found in the cellular thylakoid membrane. Component of the cytochrome b6-f complex, which mediates electron transfer between photosystem II (PSII) and photosystem I (PSI), cyclic electron flow around PSI, and state transitions. This chain is Cytochrome f, found in Synechococcus sp. (strain CC9311).